Here is a 272-residue protein sequence, read N- to C-terminus: Acyl-[acyl-carrier-protein]--UDP-N-acetylglucosamine O-acyltransferase (272 aa).

The protein belongs to the transferase hexapeptide repeat family. LpxA subfamily. As to quaternary structure, homotrimer.

Its subcellular location is the cytoplasm. The enzyme catalyses a (3R)-hydroxyacyl-[ACP] + UDP-N-acetyl-alpha-D-glucosamine = a UDP-3-O-[(3R)-3-hydroxyacyl]-N-acetyl-alpha-D-glucosamine + holo-[ACP]. It participates in glycolipid biosynthesis; lipid IV(A) biosynthesis; lipid IV(A) from (3R)-3-hydroxytetradecanoyl-[acyl-carrier-protein] and UDP-N-acetyl-alpha-D-glucosamine: step 1/6. Functionally, involved in the biosynthesis of lipid A, a phosphorylated glycolipid that anchors the lipopolysaccharide to the outer membrane of the cell. The polypeptide is Acyl-[acyl-carrier-protein]--UDP-N-acetylglucosamine O-acyltransferase (Rhizobium johnstonii (strain DSM 114642 / LMG 32736 / 3841) (Rhizobium leguminosarum bv. viciae)).